A 218-amino-acid chain; its full sequence is Probable GTP-binding protein EngB (218 aa).

The EngB-type G domain occupies 31–205; it reads VGVEIAFAGR…LGILNEWCHP (175 aa). Residues 39–46, 66–70, 84–87, 151–154, and 184–186 each bind GTP; these read GRSNAGKS, GRTQL, DLPG, TKCD, and FSS. Mg(2+)-binding residues include serine 46 and threonine 68.

The protein belongs to the TRAFAC class TrmE-Era-EngA-EngB-Septin-like GTPase superfamily. EngB GTPase family. It depends on Mg(2+) as a cofactor.

In terms of biological role, necessary for normal cell division and for the maintenance of normal septation. The protein is Probable GTP-binding protein EngB of Shewanella loihica (strain ATCC BAA-1088 / PV-4).